Reading from the N-terminus, the 295-residue chain is 4-hydroxy-tetrahydrodipicolinate synthase (295 aa).

Residue T46 participates in pyruvate binding. The Proton donor/acceptor role is filled by Y134. Catalysis depends on K162, which acts as the Schiff-base intermediate with substrate. I205 contacts pyruvate.

The protein belongs to the DapA family. As to quaternary structure, homotetramer; dimer of dimers.

It is found in the cytoplasm. It catalyses the reaction L-aspartate 4-semialdehyde + pyruvate = (2S,4S)-4-hydroxy-2,3,4,5-tetrahydrodipicolinate + H2O + H(+). Its pathway is amino-acid biosynthesis; L-lysine biosynthesis via DAP pathway; (S)-tetrahydrodipicolinate from L-aspartate: step 3/4. Functionally, catalyzes the condensation of (S)-aspartate-beta-semialdehyde [(S)-ASA] and pyruvate to 4-hydroxy-tetrahydrodipicolinate (HTPA). The polypeptide is 4-hydroxy-tetrahydrodipicolinate synthase (Anaeromyxobacter sp. (strain Fw109-5)).